Reading from the N-terminus, the 457-residue chain is ATP-dependent RNA helicase DbpA (457 aa).

Residues 3–31 (AFSTLNVLPPAQLTNLNELGYLTMTPVQA) carry the Q motif motif. The region spanning 34-205 (LPAILAGKDV…GRVQRDPLAI (172 aa)) is the Helicase ATP-binding domain. Position 47–54 (47–54 (AKTGSGKT)) interacts with ATP. The DEAD box signature appears at 153–156 (DEAD). The region spanning 230–376 (PLLQRLLSLH…QTPPANSSIA (147 aa)) is the Helicase C-terminal domain. The tract at residues 383-457 (ATLCIDGGKK…GKTCRVRLLK (75 aa)) is involved in 23S rRNA binding.

Belongs to the DEAD box helicase family. DbpA subfamily. In terms of assembly, monomer.

It is found in the cytoplasm. The enzyme catalyses ATP + H2O = ADP + phosphate + H(+). Requires hairpin 92 of 23S rRNA for optimal activity. ATPase activity is stimulated by interaction of the N-terminal domain with RNA. Its function is as follows. DEAD-box RNA helicase involved in the assembly of the 50S ribosomal subunit. Has an RNA-dependent ATPase activity, which is specific for 23S rRNA, and a 3' to 5' RNA helicase activity that uses the energy of ATP hydrolysis to destabilize and unwind short rRNA duplexes. Requires a single-stranded RNA loading site on the 3' side of the substrate helix. The polypeptide is ATP-dependent RNA helicase DbpA (Escherichia coli (strain K12)).